Reading from the N-terminus, the 869-residue chain is Rho GTPase-activating protein 27 (869 aa).

The SH3 domain maps to 6-69 (EGDVYVLVEH…PAQYVRELPA (64 aa)). The residue at position 28 (alanine 28) is a Phosphotyrosine. Positions 104–134 (GADGSSAEPRGRASSLCGPARQRTGGQRNSL) are disordered. Residues serine 155, serine 215, and serine 249 each carry the phosphoserine modification. Disordered stretches follow at residues 208 to 300 (RCPP…SGES) and 331 to 401 (ETEE…GWSC). Basic and acidic residues predominate over residues 209–220 (CPPRAESPKQVD). The segment covering 235–250 (RATSPRSAAAPPRLSP) has biased composition (low complexity). In terms of domain architecture, WW 1 spans 246 to 280 (PRLSPVWETHTDTGTGRPYYYNPDTGVTTWESPFE). The span at 283–294 (EGTTSPATSRAS) shows a compositional bias: polar residues. The region spanning 299-333 (ESLETEWGQYWDEESRRVFFYNPLTGETAWEDETE) is the WW 2 domain. Over residues 345 to 356 (MQPSLSPRSPGQ) the composition is skewed to polar residues. Serine 350 is modified (phosphoserine). The WW 3 domain maps to 414–447 (QFTQEQWVRLEDQHGKPYFYNPEDSSVQWELPQV). Disordered regions lie at residues 449–477 (IPAP…KIKT) and 623–642 (EEDV…GLES). Serine 459 and serine 462 each carry phosphoserine. Threonine 464 is modified (phosphothreonine). Residue serine 469 is modified to Phosphoserine. The region spanning 477–593 (TLDKAGVLHR…WHKAIAEGIS (117 aa)) is the PH domain. Phosphoserine is present on residues serine 632 and serine 636. One can recognise a Rho-GAP domain in the interval 677 to 866 (CALAQLCERE…LILHQCADIF (190 aa)).

In terms of assembly, interacts with SH3KBP1/CIN85. Widely expressed. Highly expressed in kidney, lung, small intestine and thymus.

It is found in the cytoplasm. The protein localises to the membrane. Functionally, rho GTPase-activating protein which may be involved in clathrin-mediated endocytosis. GTPase activators for the Rho-type GTPases act by converting them to an inactive GDP-bound state. Has activity toward CDC42 and RAC1. The chain is Rho GTPase-activating protein 27 (Arhgap27) from Mus musculus (Mouse).